The sequence spans 355 residues: Serum paraoxonase/arylesterase 1 (355 aa).

A disulfide bond links C42 and C353. Residues E53 and D54 each coordinate Ca(2+). H115 functions as the Proton acceptor in the catalytic mechanism. I117, N168, D169, and N224 together coordinate Ca(2+). N-linked (GlcNAc...) asparagine glycosylation occurs at N253. Ca(2+)-binding residues include D269 and N270. Residues N270 and N324 are each glycosylated (N-linked (GlcNAc...) asparagine).

Belongs to the paraoxonase family. As to quaternary structure, homodimer. Interacts with CLU. Ca(2+) is required as a cofactor. In terms of processing, glycosylated. Post-translationally, the signal sequence is not cleaved. In terms of tissue distribution, plasma. Associated with HDL.

Its subcellular location is the secreted. The protein localises to the extracellular space. The catalysed reaction is a phenyl acetate + H2O = a phenol + acetate + H(+). It carries out the reaction An aryl dialkyl phosphate + H2O = dialkyl phosphate + an aryl alcohol.. The enzyme catalyses an N-acyl-L-homoserine lactone + H2O = an N-acyl-L-homoserine + H(+). Functionally, hydrolyzes the toxic metabolites of a variety of organophosphorus insecticides. Capable of hydrolyzing a broad spectrum of organophosphate substrates and lactones, and a number of aromatic carboxylic acid esters. Mediates an enzymatic protection of low density lipoproteins against oxidative modification. The polypeptide is Serum paraoxonase/arylesterase 1 (Pon1) (Rattus norvegicus (Rat)).